The sequence spans 805 residues: Leucine--tRNA ligase (805 aa).

The 'HIGH' region signature appears at 40–51; it reads PYPSGSGLHVGH. Positions 576 to 580 match the 'KMSKS' region motif; it reads KMSKS. Position 579 (lysine 579) interacts with ATP.

This sequence belongs to the class-I aminoacyl-tRNA synthetase family.

It localises to the cytoplasm. It catalyses the reaction tRNA(Leu) + L-leucine + ATP = L-leucyl-tRNA(Leu) + AMP + diphosphate. In Chlorobium chlorochromatii (strain CaD3), this protein is Leucine--tRNA ligase.